A 313-amino-acid chain; its full sequence is MSVIDTNQIDLAAPRISEAGVADYVALLKPRVMSLVVFTALVGMLLAPGDFHPVLAVTAMLCIAVGGGAAGALNMWYENDIDALMTRTANRPIPRGRVTRPEALTFGMTLSFFSVVTLGVLVNWIAAALLAFTIFFYVVIYTMWLKRSTAQNIVIGGAAGALPPVVAWAAVTGSLAVEPLLLFAIIFFWTPPHFWALALFRNDDYARAGVPMLPVVAGPDHTRLQILLYTIVLVAVAAAPWPLGYFDAVYGIASLALGGWMLVLAIRVYRHRSGSAALRATRNLFKFSILYLFALFSILLIEVVAKAVWQLFA.

8 helical membrane-spanning segments follow: residues 32 to 52, 53 to 73, 120 to 140, 153 to 173, 180 to 200, 226 to 246, 248 to 268, and 284 to 304; these read VMSL…GDFH, PVLA…AGAL, VLVN…YVVI, IVIG…AVTG, LLLF…LALF, ILLY…LGYF, AVYG…AIRV, and LFKF…IEVV.

The protein belongs to the UbiA prenyltransferase family. Protoheme IX farnesyltransferase subfamily.

It is found in the cell inner membrane. The enzyme catalyses heme b + (2E,6E)-farnesyl diphosphate + H2O = Fe(II)-heme o + diphosphate. It participates in porphyrin-containing compound metabolism; heme O biosynthesis; heme O from protoheme: step 1/1. Functionally, converts heme B (protoheme IX) to heme O by substitution of the vinyl group on carbon 2 of heme B porphyrin ring with a hydroxyethyl farnesyl side group. The chain is Protoheme IX farnesyltransferase from Rhodopseudomonas palustris (strain BisB5).